Here is an 882-residue protein sequence, read N- to C-terminus: Homeobox-leucine zipper protein ROC3 (882 aa).

Residues 104 to 144 (DVDDDHKPQHSGHDQPPDAAQPSGAAGGNAKKKRYHRHTAH) form a disordered region. Positions 107–119 (DDHKPQHSGHDQP) are enriched in basic and acidic residues. Positions 133–143 (AKKKRYHRHTA) are enriched in basic residues. A DNA-binding region (homeobox) is located at residues 134-193 (KKKRYHRHTAHQIQQMEALFKECPHPDDKQRLKLSQELGLKPRQVKFWFQNRRTQMKAQQ). Residues 200–263 (ILRAENENLK…LDRLACIATR (64 aa)) are a coiled coil. Residues 340-584 (QEQDKQLVVD…LQRQCERLAS (245 aa)) enclose the START domain. Positions 782 to 816 (AAAPTISSSTTTTTGNGNGETSSTPPRNSSSNNNN) are enriched in low complexity. Residues 782–820 (AAAPTISSSTTTTTGNGNGETSSTPPRNSSSNNNNADEL) are disordered.

This sequence belongs to the HD-ZIP homeobox family. Class IV subfamily.

It is found in the nucleus. In terms of biological role, probable transcription factor. The polypeptide is Homeobox-leucine zipper protein ROC3 (ROC3) (Oryza sativa subsp. indica (Rice)).